A 378-amino-acid chain; its full sequence is Forkhead box protein I1 (378 aa).

2 disordered regions span residues 1–26 (MSSFDLPAPSPPRCSPQFPSIGQEPP) and 208–278 (DNGN…APCL). Residues 123–217 (RPPYSYSALI…DNGNFRRKRK (95 aa)) constitute a DNA-binding region (fork-head). Residues 236-248 (SSLPVDSPKTTEP) are compositionally biased toward polar residues.

As to expression, expressed in kidney.

It localises to the nucleus. Functionally, transcriptional activator required for the development of normal hearing, sense of balance and kidney function. Required for the expression of SLC26A4/PDS, JAG1 and COCH in a subset of epithelial cells and the development of the endolymphatic system in the inner ear. Also required for the expression of SLC4A1/AE1, SLC4A9/AE4, ATP6V1B1 and the differentiation of intercalated cells in the epithelium of distal renal tubules. This is Forkhead box protein I1 (FOXI1) from Homo sapiens (Human).